Reading from the N-terminus, the 364-residue chain is Large ribosomal subunit protein bL27m (364 aa).

Residues 1–19 (MFSSSWQQVPKFVVQQVRT) constitute a mitochondrion transit peptide.

It belongs to the bacterial ribosomal protein bL27 family.

The protein localises to the mitochondrion. Component of the large subunit of mitochondrial ribosome. This Kluyveromyces lactis (strain ATCC 8585 / CBS 2359 / DSM 70799 / NBRC 1267 / NRRL Y-1140 / WM37) (Yeast) protein is Large ribosomal subunit protein bL27m (MRPL2).